A 461-amino-acid chain; its full sequence is Vitamin K-dependent protein C (461 aa).

The signal sequence occupies residues 1–18 (MWQFRIFLLFASTWGISG). A propeptide spanning residues 19–41 (VSAHPDPVFSSSEGAHQVLRVRR) is cleaved from the precursor. A Gla domain is found at 42–87 (ANSFLEEVRAGSLERECMEEICDFEEAQEIFQNVEDTLAFWIKYFD). E47, E48, E55, E57, E60, E61, E66, E67, E70, and E76 each carry 4-carboxyglutamate. Cysteines 58 and 63 form a disulfide. 9 disulfide bridges follow: C91-C110, C100-C105, C104-C119, C121-C130, C139-C150, C146-C159, C161-C174, C182-C320, and C239-C255. EGF-like domains follow at residues 96–131 (LDHQ…RFCQ) and 135–175 (GFQD…MHCR). D112 is modified ((3R)-3-hydroxyaspartate). Residues 213 to 450 (IVNGTLTKQG…YLKWIHSYIG (238 aa)) form the Peptidase S1 domain. A glycan (N-linked (GlcNAc...) asparagine) is linked at N215. The active-site Charge relay system is the H254. N-linked (GlcNAc...) asparagine glycosylation occurs at N291. D300 serves as the catalytic Charge relay system. The N-linked (GlcNAc...) asparagine glycan is linked to N355. 2 disulfide bridges follow: C373–C387 and C398–C426. S402 acts as the Charge relay system in catalysis.

The protein belongs to the peptidase S1 family. Synthesized as a single chain precursor, which is cleaved into a light chain and a heavy chain held together by a disulfide bond. The enzyme is then activated by thrombin, which cleaves a tetradecapeptide from the amino end of the heavy chain; this reaction, which occurs at the surface of endothelial cells, is strongly promoted by thrombomodulin. The vitamin K-dependent, enzymatic carboxylation of some Glu residues allows the modified protein to bind calcium. In terms of processing, the iron and 2-oxoglutarate dependent 3-hydroxylation of aspartate and asparagine is (R) stereospecific within EGF domains. As to expression, plasma; synthesized in the liver.

The protein resides in the secreted. It is found in the golgi apparatus. It localises to the endoplasmic reticulum. It catalyses the reaction Degradation of blood coagulation factors Va and VIIIa.. Protein C is a vitamin K-dependent serine protease that regulates blood coagulation by inactivating factors Va and VIIIa in the presence of calcium ions and phospholipids. Exerts a protective effect on the endothelial cell barrier function. The sequence is that of Vitamin K-dependent protein C (Proc) from Rattus norvegicus (Rat).